The sequence spans 445 residues: tRNA-2-methylthio-N(6)-dimethylallyladenosine synthase (445 aa).

Residues 7-121 form the MTTase N-terminal domain; that stretch reads KHFYIKSFGC…LPELIEKAAS (115 aa). [4Fe-4S] cluster-binding residues include cysteine 16, cysteine 52, cysteine 84, cysteine 156, cysteine 160, and cysteine 163. Residues 142-374 form the Radical SAM core domain; it reads RQVGASAFLT…QALLNQQQFD (233 aa). The TRAM domain occupies 377–438; the sequence is QQTIGRKATV…PNSVKGQFLD (62 aa).

Belongs to the methylthiotransferase family. MiaB subfamily. In terms of assembly, monomer. [4Fe-4S] cluster serves as cofactor.

The protein localises to the cytoplasm. The catalysed reaction is N(6)-dimethylallyladenosine(37) in tRNA + (sulfur carrier)-SH + AH2 + 2 S-adenosyl-L-methionine = 2-methylsulfanyl-N(6)-dimethylallyladenosine(37) in tRNA + (sulfur carrier)-H + 5'-deoxyadenosine + L-methionine + A + S-adenosyl-L-homocysteine + 2 H(+). In terms of biological role, catalyzes the methylthiolation of N6-(dimethylallyl)adenosine (i(6)A), leading to the formation of 2-methylthio-N6-(dimethylallyl)adenosine (ms(2)i(6)A) at position 37 in tRNAs that read codons beginning with uridine. This is tRNA-2-methylthio-N(6)-dimethylallyladenosine synthase from Zymomonas mobilis subsp. mobilis (strain ATCC 31821 / ZM4 / CP4).